The chain runs to 172 residues: Shikimate kinase (172 aa).

14–19 (GAGKST) is a binding site for ATP. S18 is a Mg(2+) binding site. Positions 36, 60, and 82 each coordinate substrate. R120 lines the ATP pocket. A substrate-binding site is contributed by R139. Position 156 (Q156) interacts with ATP.

The protein belongs to the shikimate kinase family. As to quaternary structure, monomer. Mg(2+) is required as a cofactor.

The protein localises to the cytoplasm. The catalysed reaction is shikimate + ATP = 3-phosphoshikimate + ADP + H(+). Its pathway is metabolic intermediate biosynthesis; chorismate biosynthesis; chorismate from D-erythrose 4-phosphate and phosphoenolpyruvate: step 5/7. Its function is as follows. Catalyzes the specific phosphorylation of the 3-hydroxyl group of shikimic acid using ATP as a cosubstrate. The sequence is that of Shikimate kinase from Aliivibrio fischeri (strain ATCC 700601 / ES114) (Vibrio fischeri).